The sequence spans 174 residues: Translation initiation factor IF-3 (174 aa).

It belongs to the IF-3 family. As to quaternary structure, monomer.

It is found in the cytoplasm. Its function is as follows. IF-3 binds to the 30S ribosomal subunit and shifts the equilibrium between 70S ribosomes and their 50S and 30S subunits in favor of the free subunits, thus enhancing the availability of 30S subunits on which protein synthesis initiation begins. This is Translation initiation factor IF-3 from Helicobacter hepaticus (strain ATCC 51449 / 3B1).